A 105-amino-acid polypeptide reads, in one-letter code: N(4)-acetylcytidine amidohydrolase (105 aa).

One can recognise an ASCH domain in the interval 7–93 (TFFERFEHDI…VIAEIYPGLE (87 aa)). The active-site Proton acceptor is the Lys-21. Thr-24 serves as the catalytic Nucleophile. Glu-74 (proton donor) is an active-site residue.

The protein belongs to the N(4)-acetylcytidine amidohydrolase family.

The catalysed reaction is N(4)-acetylcytidine + H2O = cytidine + acetate + H(+). It catalyses the reaction N(4)-acetyl-2'-deoxycytidine + H2O = 2'-deoxycytidine + acetate + H(+). The enzyme catalyses N(4)-acetylcytosine + H2O = cytosine + acetate + H(+). Its function is as follows. Catalyzes the hydrolysis of N(4)-acetylcytidine (ac4C). In Shewanella baltica (strain OS223), this protein is N(4)-acetylcytidine amidohydrolase.